The sequence spans 280 residues: UPF0750 membrane protein YitT (280 aa).

The next 4 helical transmembrane spans lie at 9–29 (LLIV…FLIP), 54–74 (FYIS…ILGW), 80–100 (SFTV…GILP), and 151–171 (VGTY…LLQG).

The protein belongs to the UPF0750 family.

Its subcellular location is the cell membrane. This Bacillus subtilis (strain 168) protein is UPF0750 membrane protein YitT (yitT).